The primary structure comprises 645 residues: Homeobox protein B-H2 (645 aa).

Disordered regions lie at residues 1 to 50 (MTTM…TTAT), 86 to 134 (SSGG…QAAL), 149 to 176 (RERE…AHHP), 240 to 259 (SHLS…HDER), 265 to 385 (MLQQ…KART), and 553 to 645 (GAQQ…ALEV). A compositionally biased stretch (low complexity) spans 18–29 (SAPSATAHHPAA). Over residues 106-121 (QHHHHHQQQQQHHHHQ) the composition is skewed to basic residues. Residues 122–134 (QQQQQQQHQQAAL) show a composition bias toward low complexity. Basic and acidic residues predominate over residues 149-165 (REREREREREHYRERHS). Residues 244 to 253 (HQQHHPHLHH) are compositionally biased toward basic residues. Positions 275-316 (NNNNNNNNSSSASNNNNNNNNSASANSNIISGNSSSSNNNNG) are enriched in low complexity. A compositionally biased stretch (gly residues) spans 317–328 (SGNGNMLLGGPG). Polar residues predominate over residues 329-339 (SSISGDQASTI). The segment covering 362 to 377 (SSANGDSSSHLSLSLS) has biased composition (low complexity). The homeobox DNA-binding region spans 380–439 (QRKARTAFTDHQLQTLEKSFERQKYLSVQDRMELANKLELSDCQVKTWYQNRRTKWKRQT). Positions 553-574 (GAQQQQQQPPAASRSPATSQSA) are enriched in low complexity. Residues 583-592 (TSSSSRQRLI) show a composition bias toward polar residues. Thr593 carries the post-translational modification Phosphothreonine. Positions 594–603 (PSPPLNPGSP) are enriched in pro residues. Phosphoserine is present on residues Ser595 and Ser602. A compositionally biased stretch (basic and acidic residues) spans 618–632 (DEERDIERERERERE). Residues 633 to 645 (RDEDDEEELALEV) show a composition bias toward acidic residues.

This sequence belongs to the Antp homeobox family. In terms of tissue distribution, B-H1 and B-H2 are abundant in the eye-antenna imaginal disk. Expressed in R1 and R6 cells throughout larval stage until 30 hours after puparium formation, at which time expression is seen in the anterior and posterior primary pigment cells. Coexpressed in embryonic glial cells, neurons of the CNS and PNS, most latitudinal anterior cells of the developing notum and the central circular region of the leg and antennal imaginal disk throughout larval development.

It is found in the nucleus. In terms of biological role, B-H1 and B-H2 are regulated by members of the wg signaling pathway; wg and dpp. B-H1 and B-H2 are coexpressed and functionally required in R1 and R6 receptor cells and primary pigment cells for normal eye development. Coexpression is also required for the fate determination of external sensory organs, formation of notal microchaetae, formation of presutural macrochaetae, antennal development and for distal leg morphogenesis; segmentation and specification of tarsal segments 3-5. This Drosophila melanogaster (Fruit fly) protein is Homeobox protein B-H2 (B-H2).